The following is a 158-amino-acid chain: Anaerobic ribonucleoside-triphosphate reductase-activating protein (158 aa).

Residues Cys26, Cys30, and Cys33 each coordinate [4Fe-4S] cluster. S-adenosyl-L-methionine-binding positions include 32 to 34 (GCY) and Gly74.

Belongs to the organic radical-activating enzymes family. Forms a tetramer composed of two NrdD and two NrdG subunits. [4Fe-4S] cluster is required as a cofactor.

It localises to the cytoplasm. It catalyses the reaction glycyl-[protein] + reduced [flavodoxin] + S-adenosyl-L-methionine = glycin-2-yl radical-[protein] + semiquinone [flavodoxin] + 5'-deoxyadenosine + L-methionine + H(+). Its function is as follows. Activation of anaerobic ribonucleoside-triphosphate reductase under anaerobic conditions by generation of an organic free radical, using S-adenosylmethionine and reduced flavodoxin as cosubstrates to produce 5'-deoxy-adenosine. The polypeptide is Anaerobic ribonucleoside-triphosphate reductase-activating protein (nrdG) (Pasteurella multocida (strain Pm70)).